Reading from the N-terminus, the 488-residue chain is Ribulose bisphosphate carboxylase large chain 2 (488 aa).

Substrate contacts are provided by asparagine 128 and threonine 178. Lysine 180 serves as the catalytic Proton acceptor. Lysine 182 serves as a coordination point for substrate. Positions 206, 208, and 209 each coordinate Mg(2+). Lysine 206 bears the N6-carboxylysine mark. Histidine 298 acts as the Proton acceptor in catalysis. Residues arginine 299, histidine 331, and serine 383 each contribute to the substrate site.

The protein belongs to the RuBisCO large chain family. Type I subfamily. In terms of assembly, heterohexadecamer of 8 large chains and 8 small chains. It depends on Mg(2+) as a cofactor.

The enzyme catalyses 2 (2R)-3-phosphoglycerate + 2 H(+) = D-ribulose 1,5-bisphosphate + CO2 + H2O. The catalysed reaction is D-ribulose 1,5-bisphosphate + O2 = 2-phosphoglycolate + (2R)-3-phosphoglycerate + 2 H(+). In terms of biological role, ruBisCO catalyzes two reactions: the carboxylation of D-ribulose 1,5-bisphosphate, the primary event in carbon dioxide fixation, as well as the oxidative fragmentation of the pentose substrate. Both reactions occur simultaneously and in competition at the same active site. The chain is Ribulose bisphosphate carboxylase large chain 2 from Nitrobacter hamburgensis (strain DSM 10229 / NCIMB 13809 / X14).